Consider the following 79-residue polypeptide: Dicentracin (79 aa).

A signal peptide spans methionine 1–alanine 22. Glycine 44 carries the post-translational modification Glycine amide. The propeptide occupies alanine 47–aspartate 79. The interval glutamine 48–glutamine 67 is disordered.

It belongs to the pleurocidin family.

The protein resides in the secreted. The chain is Dicentracin from Dicentrarchus labrax (European seabass).